Reading from the N-terminus, the 384-residue chain is N-acetylneuraminate epimerase (384 aa).

The signal sequence occupies residues 1 to 29 (MGMQMKNFKKMMTLMALCLSVAITTSGYA). Kelch repeat units follow at residues 51 to 95 (VIYV…VFLN), 97 to 149 (ELYV…VKLN), 151 to 184 (TMVL…KVIY), 185 to 230 (NYFN…VMEN), 233 to 282 (LMLI…LAGA), 304 to 353 (QNYT…SYGD), and 355 to 384 (VFLI…LLIK). The Proton acceptor role is filled by glutamate 239.

It belongs to the NanM family. Homodimer.

Its subcellular location is the periplasm. It carries out the reaction N-acetyl-alpha-neuraminate = N-acetyl-beta-neuraminate. Functionally, converts alpha-N-acetylneuranimic acid (Neu5Ac) to the beta-anomer, accelerating the equilibrium between the alpha- and beta-anomers. Probably facilitates sialidase-negative bacteria to compete successfully for limited amounts of extracellular Neu5Ac, which is likely taken up in the beta-anomer. In addition, the rapid removal of sialic acid from solution might be advantageous to the bacterium to damp down host responses. This chain is N-acetylneuraminate epimerase, found in Salmonella enteritidis PT4 (strain P125109).